Reading from the N-terminus, the 256-residue chain is UPF0246 protein TERTU_4575 (256 aa).

The protein belongs to the UPF0246 family.

This chain is UPF0246 protein TERTU_4575, found in Teredinibacter turnerae (strain ATCC 39867 / T7901).